An 898-amino-acid polypeptide reads, in one-letter code: MLRTIVTKIFGSRNDRILRRLNKQVRIINKLEAEFELLTDEELKSKTTEFRTRLKNGEKLENLIPEAFATVREASKRILGMRPFDVQLIGGMVLNNRCIAEMRTGEGKTLTATLPCYLNALTGKGVHVVTVNDYLARRDAETNRPLFEFLGMTVGINVPGLSPEEKRAAYAADITYATNSELGFDYLRDNLAHSAQDRFQKHLHYALVDEVDSILIDEARTPLIISGPAEDSSELYMAMDKLIPILIQQDKEDTEEYQGDGDFTLDLKNKQAHLTERGQEKIEQWLMEKGFINENESLYSPARISLLHHIYAALRAHKLFERDVDYIVKNGEIVIVDEHTGRTMAGRRWSDGLHQAIEAKEGVQIQGENQTVASITYQNYFRLYEKLAGMTGTADTEAFEFQQIYGLETIVIPTNKPMIRDDRTDIMFENEKYKFDAIIEDIKDCVARNQPVLVGTISIEKSELLSNALSKAGIKHNVLNAKFHAQEAEIIANAGYPSAVTIATNMAGRGTDIVLGGNWKAEVAKLDNPTEEQIEAIKAAWQIRHETVKQAGGLHIIGTERHESRRIDNQLRGRSGRQGDPGSSRFYLSLDDALMRIYLTEGKLNFMRKMFTEKGEGMESKMLAKVIAQAQAKVEAHNFDGRKNLLEFDDVANDQRHAIYEQRNTLLDNEDIAETIQVIRQDVFNHVIDEYVPPHSLEEQWDIPALETRLKQDFALDLPLSKWLEEDNTFNEDVLRERVLAVAISEYKRKEELVGQEAMRNFEKGVMLQTLDELWKEHLSAMDHLRRGIHLRGYAQKDPKQEYKKESFQMFTDMLDTLKLSVITTLSRVQIRTQDEVEKAEQARQKIAERENAAMQYQNNEGTSSLHEKSEHKIGRNESCPCGSGKKYKHCHGSKAKY.

Residues glutamine 87, 105-109 (GEGKT), and aspartate 512 contribute to the ATP site. Positions 855–865 (MQYQNNEGTSS) are enriched in polar residues. A disordered region spans residues 855 to 898 (MQYQNNEGTSSLHEKSEHKIGRNESCPCGSGKKYKHCHGSKAKY). Over residues 866–876 (LHEKSEHKIGR) the composition is skewed to basic and acidic residues. Cysteine 880, cysteine 882, cysteine 891, and histidine 892 together coordinate Zn(2+). A compositionally biased stretch (basic residues) spans 886–898 (KKYKHCHGSKAKY).

It belongs to the SecA family. In terms of assembly, monomer and homodimer. Part of the essential Sec protein translocation apparatus which comprises SecA, SecYEG and auxiliary proteins SecDF-YajC and YidC. Zn(2+) is required as a cofactor.

Its subcellular location is the cell inner membrane. The protein resides in the cytoplasm. The catalysed reaction is ATP + H2O + cellular proteinSide 1 = ADP + phosphate + cellular proteinSide 2.. Part of the Sec protein translocase complex. Interacts with the SecYEG preprotein conducting channel. Has a central role in coupling the hydrolysis of ATP to the transfer of proteins into and across the cell membrane, serving both as a receptor for the preprotein-SecB complex and as an ATP-driven molecular motor driving the stepwise translocation of polypeptide chains across the membrane. The sequence is that of Protein translocase subunit SecA from Histophilus somni (strain 2336) (Haemophilus somnus).